Here is a 472-residue protein sequence, read N- to C-terminus: MIIKTRFAPSPTGPLHIGSVRTALYAWLFAKSMNGKFVLRIEDTDKRRSTNAFTSEIINNLEWLGLNWDEGPYFQSDRLEYYRNIIKKMVEAGLAYKCYCTNDRLLKLRKFQISLGKKPKYDRKCRYLVKKDILSTDYVIRFCNPDFGCVTFCDKIRGKISIENKELDDLVIQRADGIPTYNFCVVIDDRDMNITHVIRGEDHISNTPRQINILRALNANIPIYAHVSMVLSEDKQKLSKRNNTITSISEYRLCGYLPESLLNYIVRLGWSHGNQEIFSISEMIKYFTLESLNKSSSCLNKKKLLWLNRFYINNLPETVIKKHLQYQFNKNNIDYKNDSDLLKLVKLLGSRYYTLQEIVDYSRCFYNKSICFNSNIMSKHLDNSSKLILKKIYDKFLDLEVWNVEVIRSLLNSSVCELQISFKKVSMTIRIAVTGHVFSPNLCSVICFLGKNKFLLRIKEALLYIKNMCFEV.

Residues 9-19 (PSPTGPLHIGS) carry the 'HIGH' region motif. The 'KMSKS' region signature appears at 237-241 (KLSKR). Lys-240 contributes to the ATP binding site.

Belongs to the class-I aminoacyl-tRNA synthetase family. Glutamate--tRNA ligase type 1 subfamily. In terms of assembly, monomer.

It is found in the cytoplasm. The enzyme catalyses tRNA(Glu) + L-glutamate + ATP = L-glutamyl-tRNA(Glu) + AMP + diphosphate. In terms of biological role, catalyzes the attachment of glutamate to tRNA(Glu) in a two-step reaction: glutamate is first activated by ATP to form Glu-AMP and then transferred to the acceptor end of tRNA(Glu). The polypeptide is Glutamate--tRNA ligase (Buchnera aphidicola subsp. Baizongia pistaciae (strain Bp)).